A 491-amino-acid polypeptide reads, in one-letter code: Probable Xaa-Pro aminopeptidase An01g13040 (491 aa).

Positions 276, 287, 420, and 459 each coordinate Mn(2+).

Belongs to the peptidase M24B family. Requires Mn(2+) as cofactor.

The enzyme catalyses Release of any N-terminal amino acid, including proline, that is linked to proline, even from a dipeptide or tripeptide.. Functionally, catalyzes the removal of a penultimate prolyl residue from the N-termini of peptides. This chain is Probable Xaa-Pro aminopeptidase An01g13040, found in Aspergillus niger (strain ATCC MYA-4892 / CBS 513.88 / FGSC A1513).